Here is a 246-residue protein sequence, read N- to C-terminus: E3 ubiquitin-protein ligase RNF182 (246 aa).

The RING-type zinc-finger motif lies at 22–70; the sequence is CKICYNRYNLRQRKPKVLGCCHRVCAKCLYKLVDCGESPQCVIVCPFCR. A run of 2 helical transmembrane segments spans residues 184-204 and 211-231; these read VFVWLLGLLYFSSLPLGIYLL and LGVVFVSLVPSSLVILMIYGF.

Interacts with ATP6V0C.

It is found in the membrane. Its subcellular location is the cytoplasm. The catalysed reaction is S-ubiquitinyl-[E2 ubiquitin-conjugating enzyme]-L-cysteine + [acceptor protein]-L-lysine = [E2 ubiquitin-conjugating enzyme]-L-cysteine + N(6)-ubiquitinyl-[acceptor protein]-L-lysine.. Its pathway is protein modification; protein ubiquitination. Its function is as follows. E3 ubiquitin-protein ligase that mediates the ubiquitination of atp6v0c and targets it to degradation via the ubiquitin-proteasome pathway. This is E3 ubiquitin-protein ligase RNF182 (rnf182) from Xenopus laevis (African clawed frog).